Consider the following 259-residue polypeptide: DNA-directed RNA polymerase 30 kDa polypeptide (259 aa).

A TFIIS-type zinc finger spans residues 155–195 (YNTPCPNCKSRNTTPMMIQTRAADEPPLVRHACRDCKQHFK). Zn(2+) contacts are provided by Cys159, Cys162, Cys187, and Cys190. The disordered stretch occupies residues 220–259 (EILPDNNPSPPESPEPASPIDDGLIRVTFDRNDEPPEDDE). Residues 226 to 236 (NPSPPESPEPA) are compositionally biased toward pro residues.

It belongs to the poxviridae DNA-directed RNA polymerase 30 kDa subunit family. As to quaternary structure, the DNA-dependent RNA polymerase (vRNAP) consists of eight subunits encoded by early viral genes and termed according to their apparent molecular masses Rpo147, Rpo132, Rpo35, Rpo30, Rpo22, Rpo19, Rpo18, and Rpo7. The same holoenzyme, with the addition of the transcription-specificity factor RAP94, is used for early gene expression.

It is found in the virion. It localises to the host cytoplasm. The catalysed reaction is RNA(n) + a ribonucleoside 5'-triphosphate = RNA(n+1) + diphosphate. Its function is as follows. Part of the DNA-dependent RNA polymerase which catalyzes the transcription of viral DNA into RNA using the four ribonucleoside triphosphates as substrates. Responsible for the transcription of early, intermediate and late genes. DNA-dependent RNA polymerase associates with the early transcription factor (ETF), itself composed of OPG118 and OPG134, thereby allowing the early genes transcription. Late transcription, and probably also intermediate transcription, require newly synthesized RNA polymerase. The chain is DNA-directed RNA polymerase 30 kDa polypeptide (OPG066) from Variola virus (isolate Human/India/Ind3/1967) (VARV).